A 123-amino-acid chain; its full sequence is Small ribosomal subunit protein uS12 (123 aa).

Residues 1-26 form a disordered region; the sequence is MPTINQLVRKPRKSRSSLNKAPALQH. 3-methylthioaspartic acid is present on D90.

Belongs to the universal ribosomal protein uS12 family. In terms of assembly, part of the 30S ribosomal subunit. Contacts proteins S8 and S17. May interact with IF1 in the 30S initiation complex.

In terms of biological role, with S4 and S5 plays an important role in translational accuracy. Functionally, interacts with and stabilizes bases of the 16S rRNA that are involved in tRNA selection in the A site and with the mRNA backbone. Located at the interface of the 30S and 50S subunits, it traverses the body of the 30S subunit contacting proteins on the other side and probably holding the rRNA structure together. The combined cluster of proteins S8, S12 and S17 appears to hold together the shoulder and platform of the 30S subunit. This is Small ribosomal subunit protein uS12 from Ehrlichia chaffeensis (strain ATCC CRL-10679 / Arkansas).